Consider the following 638-residue polypeptide: Eukaryotic translation initiation factor 2A (638 aa).

WD repeat units lie at residues 287–329 and 331–370; these read SKEG…FDFG and GPRNCAYFNPFGNLIALAGFGNLPGAVEVWDVSKREKLAN. Over residues 441-450 the composition is skewed to basic and acidic residues; that stretch reads KITKAKHEGI. The segment at 441–593 is disordered; the sequence is KITKAKHEGI…SDKERKIRSV (153 aa). Threonine 463 bears the Phosphothreonine mark. Low complexity predominate over residues 492–501; sequence AAAGGVNGNK. The span at 583–593 shows a compositional bias: basic and acidic residues; it reads ISDKERKIRSV.

This sequence belongs to the WD repeat EIF2A family.

Functionally, functions in the early steps of protein synthesis of a small number of specific mRNAs. Acts by directing the binding of methionyl-tRNAi to 40S ribosomal subunits. In contrast to the eIF-2 complex, it binds methionyl-tRNAi to 40S subunits in a codon-dependent manner, whereas the eIF-2 complex binds methionyl-tRNAi to 40S subunits in a GTP-dependent manner. The polypeptide is Eukaryotic translation initiation factor 2A (Drosophila melanogaster (Fruit fly)).